Reading from the N-terminus, the 609-residue chain is Serine/threonine-protein phosphatase 4 regulatory subunit 2 (609 aa).

Ser-68 carries the phosphoserine modification. The tract at residues 175–569 is disordered; that stretch reads NNNGNADEGS…EEARVSPSAT (395 aa). Residues 183-194 show a composition bias toward low complexity; sequence GSSPGAGSAGCA. The span at 201-225 shows a compositional bias: basic and acidic residues; the sequence is RSDDNDQPKAKKAKLEIDGEERSEA. 2 positions are modified to phosphoserine: Ser-223 and Ser-226. A compositionally biased stretch (basic and acidic residues) spans 233-244; it reads VATRVKNEKDEK. Residue Ser-252 is modified to Phosphoserine. The span at 258–270 shows a compositional bias: acidic residues; it reads EIEEPDEEVDEAD. 2 stretches are compositionally biased toward basic and acidic residues: residues 310 to 351 and 375 to 400; these read IEAE…KPDG and EPVKVKAENEKEEKKHAPIKTEKQDD. Over residues 401–410 the composition is skewed to acidic residues; that stretch reads IDSTETDDAP. Residues 414–462 are compositionally biased toward basic and acidic residues; it reads KPAEEKIASSESKPKTKSEDDPEAETKKSQPEKTETEAAEKSVSDEKQA. Phosphothreonine is present on Thr-602. At Ser-603 the chain carries Phosphoserine.

Belongs to the PPP4R2 family. As to quaternary structure, serine/threonine-protein phosphatase 4 (PP4) occurs in different assemblies of the catalytic and one or more regulatory subunits. Probably part of a PP4 PPP4C-PPP4R2-PPP4R3 complex containing Pp4-19C, PPP4R2r and flfl.

Regulatory subunit of serine/threonine-protein phosphatase 4 (PP4). The probable PP4 complex Pp4-19C-PPP4R2r-flfl (PPP4C-PPP4R2-PPP4R3) is required to prevent caspase induced cell death (in vitro). The polypeptide is Serine/threonine-protein phosphatase 4 regulatory subunit 2 (PPP4R2r) (Drosophila melanogaster (Fruit fly)).